The following is a 110-amino-acid chain: Large ribosomal subunit protein uL22 (110 aa).

This sequence belongs to the universal ribosomal protein uL22 family. Part of the 50S ribosomal subunit.

Functionally, this protein binds specifically to 23S rRNA; its binding is stimulated by other ribosomal proteins, e.g. L4, L17, and L20. It is important during the early stages of 50S assembly. It makes multiple contacts with different domains of the 23S rRNA in the assembled 50S subunit and ribosome. In terms of biological role, the globular domain of the protein is located near the polypeptide exit tunnel on the outside of the subunit, while an extended beta-hairpin is found that lines the wall of the exit tunnel in the center of the 70S ribosome. The chain is Large ribosomal subunit protein uL22 from Dichelobacter nodosus (strain VCS1703A).